Here is a 399-residue protein sequence, read N- to C-terminus: Tryptophan synthase beta chain (399 aa).

N6-(pyridoxal phosphate)lysine is present on K92.

This sequence belongs to the TrpB family. In terms of assembly, tetramer of two alpha and two beta chains. Requires pyridoxal 5'-phosphate as cofactor.

It catalyses the reaction (1S,2R)-1-C-(indol-3-yl)glycerol 3-phosphate + L-serine = D-glyceraldehyde 3-phosphate + L-tryptophan + H2O. Its pathway is amino-acid biosynthesis; L-tryptophan biosynthesis; L-tryptophan from chorismate: step 5/5. In terms of biological role, the beta subunit is responsible for the synthesis of L-tryptophan from indole and L-serine. In Bordetella petrii (strain ATCC BAA-461 / DSM 12804 / CCUG 43448), this protein is Tryptophan synthase beta chain.